A 178-amino-acid polypeptide reads, in one-letter code: MSDDIFRLATVEDASELLKLVNSAFQPIRQLDIDWPSTRADIQMVSENIEHHSAIVLERDGKLISTITIRFPWESETPPSKYPFVWWFATLPEYKGQGAGSKLLTYVEEKVLRDMLKAPALTLGTSARKHPWLADMYRRRGYEVYFEQEKDGDIGVMMHKVLIPERFNPTLLGAPSWA.

The 160-residue stretch at 4–163 (DIFRLATVED…IGVMMHKVLI (160 aa)) folds into the N-acetyltransferase domain.

The protein belongs to the acetyltransferase family.

The catalysed reaction is an S-substituted L-cysteine + acetyl-CoA = an N-acetyl-L-cysteine-S-conjugate + CoA + H(+). It catalyses the reaction S-benzyl-L-cysteine + acetyl-CoA = N-acetyl-S-benzyl-L-cysteine + CoA + H(+). It carries out the reaction S-methyl-L-cysteine + acetyl-CoA = N-acetyl-S-methyl-L-cysteine + CoA + H(+). The protein operates within amino-acid metabolism. Functionally, involved in a cysteine salvage pathway from S-alkylcysteine. Catalyzes the first step in this pathway, i.e. the amine acetylation of an S-alkylcysteine with a preference for S-benzyl-L-cysteine over S-methyl-L-cysteine. This pathway is likely important in the catabolism of alkylated cysteine generated by proteolysis of alkylated glutathione formed in the detoxification of a wide range of electrophiles. This chain is S-alkylcysteine N-acetyltransferase, found in Bacillus subtilis (strain 168).